The primary structure comprises 367 residues: tRNA (guanine(26)-N(2))-dimethyltransferase (367 aa).

A Trm1 methyltransferase domain is found at 1 to 365 (MRVSEGRVTV…ADVVEIREAT (365 aa)). S-adenosyl-L-methionine-binding residues include R34, R64, D79, D105, and A106. 4 residues coordinate Zn(2+): C234, C237, C254, and C257.

The protein belongs to the class I-like SAM-binding methyltransferase superfamily. Trm1 family.

The enzyme catalyses guanosine(26) in tRNA + 2 S-adenosyl-L-methionine = N(2)-dimethylguanosine(26) in tRNA + 2 S-adenosyl-L-homocysteine + 2 H(+). Its function is as follows. Dimethylates a single guanine residue at position 26 of a number of tRNAs using S-adenosyl-L-methionine as donor of the methyl groups. The protein is tRNA (guanine(26)-N(2))-dimethyltransferase of Haloarcula marismortui (strain ATCC 43049 / DSM 3752 / JCM 8966 / VKM B-1809) (Halobacterium marismortui).